A 202-amino-acid chain; its full sequence is MENLIIYAFIYLLSSIPFGLILAKFFAKTDIKKEGSKSIGATNVLRVVKEKNPKLAKKLAIATIILDFAKAAIPLLTLKFLHYDQALLWSVAVLAILGHCFSIYLLFEGGKGIATGAGAMIVLLPLEVLTAFIVWVVIGKIFKISSLASLAALLAFVVSSFIFNYDLEIHTHAPVFIIAFIIVYKHLPNIKRLIFKEECKVI.

The next 5 helical transmembrane spans lie at 3–23 (NLII…LILA), 87–107 (LLWS…YLLF), 118–138 (GAMI…WVVI), 144–164 (ISSL…FIFN), and 167–187 (LEIH…YKHL).

The protein belongs to the PlsY family. As to quaternary structure, probably interacts with PlsX.

It localises to the cell inner membrane. The catalysed reaction is an acyl phosphate + sn-glycerol 3-phosphate = a 1-acyl-sn-glycero-3-phosphate + phosphate. It functions in the pathway lipid metabolism; phospholipid metabolism. Functionally, catalyzes the transfer of an acyl group from acyl-phosphate (acyl-PO(4)) to glycerol-3-phosphate (G3P) to form lysophosphatidic acid (LPA). This enzyme utilizes acyl-phosphate as fatty acyl donor, but not acyl-CoA or acyl-ACP. The sequence is that of Glycerol-3-phosphate acyltransferase from Campylobacter jejuni (strain RM1221).